Here is a 214-residue protein sequence, read N- to C-terminus: MTDLSTLRLSYTHGELRRADLNADPAQQFQSWLDAALRSGLREPYAMSLATADREGRPSVRTVLLRGIQDGGLTFFTNYESHKGHDLTDNPQAEVLFFWAEHERQVRAYGPVERLSSEDSAAYFHSRPRESQLAAHASDPQSAPVSNRAELETRLTALHERFAADQEVPCPEFWGGYRIQVQEWEFWQGRPNRMHDRFRYRRNDAGWHIDRLMP.

Substrate-binding positions include 8 to 11 (RLSY) and Arg-66. Residues 61–66 (RTVLLR), 76–77 (FT), Lys-83, and Gln-105 contribute to the FMN site. The substrate site is built by Tyr-123, Arg-127, and Ser-131. A disordered region spans residues 126–146 (SRPRESQLAAHASDPQSAPVS). Residues 141-142 (QS) and Trp-187 each bind FMN. Residue 193–195 (RMH) participates in substrate binding. Residue Arg-197 participates in FMN binding.

Belongs to the pyridoxamine 5'-phosphate oxidase family. As to quaternary structure, homodimer. It depends on FMN as a cofactor.

The enzyme catalyses pyridoxamine 5'-phosphate + O2 + H2O = pyridoxal 5'-phosphate + H2O2 + NH4(+). The catalysed reaction is pyridoxine 5'-phosphate + O2 = pyridoxal 5'-phosphate + H2O2. The protein operates within cofactor metabolism; pyridoxal 5'-phosphate salvage; pyridoxal 5'-phosphate from pyridoxamine 5'-phosphate: step 1/1. It functions in the pathway cofactor metabolism; pyridoxal 5'-phosphate salvage; pyridoxal 5'-phosphate from pyridoxine 5'-phosphate: step 1/1. Functionally, catalyzes the oxidation of either pyridoxine 5'-phosphate (PNP) or pyridoxamine 5'-phosphate (PMP) into pyridoxal 5'-phosphate (PLP). The sequence is that of Pyridoxine/pyridoxamine 5'-phosphate oxidase from Deinococcus deserti (strain DSM 17065 / CIP 109153 / LMG 22923 / VCD115).